A 553-amino-acid polypeptide reads, in one-letter code: Syntaxin-binding protein 4 (553 aa).

4 positions are modified to phosphoserine: Ser-10, Ser-12, Ser-99, and Ser-212. The 87-residue stretch at 19-105 (AFQMITIAKE…RLESAWEIAF (87 aa)) folds into the PDZ domain. Residues 291 to 417 (SSEADEMERL…VLDCQLRKSE (127 aa)) are a coiled coil. A Phosphoserine modification is found at Ser-463. The WW domain occupies 496–529 (DCLPYGWEEAYTADGIKYFINHVTQTTSWIHPVM).

In terms of assembly, interacts with STX4A. Post-translationally, phosphorylated on Ser-99 by PKB/AKT2 after insulin treatment. Phosphorylation on Ser-99 abolishes the interaction with STX4A.

Its subcellular location is the cytoplasm. Functionally, plays a role in the translocation of transport vesicles from the cytoplasm to the plasma membrane. Inhibits the translocation of SLC2A4 from intracellular vesicles to the plasma membrane by STX4A binding and preventing the interaction between STX4A and VAMP2. Stimulation with insulin disrupts the interaction with STX4A, leading to increased levels of SLC2A4 at the plasma membrane. May also play a role in the regulation of insulin release by pancreatic beta cells after stimulation by glucose. In Homo sapiens (Human), this protein is Syntaxin-binding protein 4 (STXBP4).